We begin with the raw amino-acid sequence, 84 residues long: Large ribosomal subunit protein bL27 (84 aa).

It belongs to the bacterial ribosomal protein bL27 family.

In Kocuria rhizophila (strain ATCC 9341 / DSM 348 / NBRC 103217 / DC2201), this protein is Large ribosomal subunit protein bL27.